Reading from the N-terminus, the 892-residue chain is MGEKLDPELSSDGPHTKSSSKGQGTSTDNAPASKRRCVSTACIACRRRKSKCDGNLPSCAACSSVYHTTCVYDPNSDHRRKGVYKKDTDTLRTKNSTLLTLIQALLNYEEEDAFDLVRQIRSCDNLEDVAQSLVNQEKKSSGWLSNAVIHEENDIAQTDQFESELAGKMSNLVLDGSRKFIGGTSNLIFLPPGSELNEFKPGLATNGDLEGSVTRWTTVTDDQQLISHLLTMYFSWHYPFFTTLSKELFYRDYSRGVPSQYCSSLLVNTMLALGCHFSSWPGAREDPDNSATAGDHFFKEAKRLILDNDELVNSKLCTVQALALMSVREAGCGREGKGWVYSGMSFRMAFDLGLNLESSSLRDLSEEEIDARRITFWGCFLFDKCWSNYLGRQPQFTTANTSVSAVDILPNEESTLWSPYSDMGPSREYAQPSRTRAVADQISQLCKISGDLVVFFYDLAPKEKPSSKQLELKKLSEIHTRLEAWKKGLPKELEPREGQLPQALLMHMFYQLLLIHLYRPFLKYTKSTSPLPQHVSPRKLCTQAAAAISKLLRLYKRTYGFKQICNIAVYIAHTALTIHLLNLPEKNAQRDVIHGLRHLEEMGESWLCARRTLRILDISASKWQVQLPREAVIVFEQTHARWGSWGPWDQAASPSTTSDSPPSVSSQSVVATTDLSQPVSQSAGNQPANPSMGTSPNLTQPVASQYSSTPSGPVSVSAMRAVQRSFSAQLAHNEARQPEPTYLRPVSTSYGPVPSTQSAQEQWYSPTEAQFRAFTAAHSMPTTSAQSPLTTFDTPENLVEESQDWWSRDVNALQLGAEDWTQNWNNGLPTTSADWRYVDNVPNIPSTSAPDADYKPPQPPPNMARPNQYPTDPVANVNSNQTNMIFPGSFQR.

Positions 1 to 32 (MGEKLDPELSSDGPHTKSSSKGQGTSTDNAPA) are disordered. The span at 16 to 27 (TKSSSKGQGTST) shows a compositional bias: low complexity. Residues 42-70 (CIACRRRKSKCDGNLPSCAACSSVYHTTC) constitute a DNA-binding region (zn(2)-C6 fungal-type). Disordered regions lie at residues 646–714 (GPWD…SGPV), 731–761 (AHNE…SAQE), and 842–892 (PNIP…SFQR). Residues 649–674 (DQAASPSTTSDSPPSVSSQSVVATTD) are compositionally biased toward low complexity. Polar residues-rich tracts occupy residues 675 to 714 (LSQP…SGPV), 746 to 761 (VSTS…SAQE), and 876 to 892 (NVNS…SFQR).

The protein localises to the nucleus. Functionally, pathway-specific regulatory gene of nitrate assimilation; it activates the transcription of the genes for nitrate and nitrite reductases (niaD and niiA). The polypeptide is Nitrogen assimilation transcription factor nirA (nirA) (Emericella nidulans (strain FGSC A4 / ATCC 38163 / CBS 112.46 / NRRL 194 / M139) (Aspergillus nidulans)).